An 84-amino-acid chain; its full sequence is UPF0248 protein PF1300 (84 aa).

The protein belongs to the UPF0248 family.

This is UPF0248 protein PF1300 from Pyrococcus furiosus (strain ATCC 43587 / DSM 3638 / JCM 8422 / Vc1).